Consider the following 334-residue polypeptide: MKQVVYIANSESKNIEVWNLCKSGKMNLIQKIETDGKIQPINIIQKRNLLYAGIFPDNKIITYSINHNGFLEKKNESNIPGKANYISFDKKKEFLFCSSYHSNFISVSPLNKFGIPQNPIQIIYNIEGCHAAKMNYKYNILFVISLKEDCIYLYYLTDFGILKSTEQNILHTQKKSGPRHIIFHPNQDFVYTINELNGTIDVWKIYKKNNVIKVKNIQNIHVLKNRFLKDYWCSDIHITSCGRFLYACDRFFNIISLFHINQNDNKLVFFKSYDTEEQPRSFNINSHNTHLIVAGEKSNTFIIYSISNSTGELKKINVYSTGQRPVWILIHALC.

This sequence belongs to the cycloisomerase 2 family.

It carries out the reaction 6-phospho-D-glucono-1,5-lactone + H2O = 6-phospho-D-gluconate + H(+). It participates in carbohydrate degradation; pentose phosphate pathway; D-ribulose 5-phosphate from D-glucose 6-phosphate (oxidative stage): step 2/3. In terms of biological role, catalyzes the hydrolysis of 6-phosphogluconolactone to 6-phosphogluconate. The polypeptide is 6-phosphogluconolactonase (Buchnera aphidicola subsp. Acyrthosiphon pisum (strain 5A)).